An 81-amino-acid polypeptide reads, in one-letter code: Putative membrane protein insertion efficiency factor (81 aa).

This sequence belongs to the UPF0161 family.

It localises to the cell inner membrane. Its function is as follows. Could be involved in insertion of integral membrane proteins into the membrane. The protein is Putative membrane protein insertion efficiency factor of Legionella pneumophila subsp. pneumophila (strain Philadelphia 1 / ATCC 33152 / DSM 7513).